Consider the following 78-residue polypeptide: RNA-binding protein Hfq (78 aa).

The region spanning 10-69 is the Sm domain; sequence DPFLNALRKEHVPVSIYLVNGIKLQGNIESFDQYVVLLRNTVTQMVYKHAISTVVPARPV.

Belongs to the Hfq family. As to quaternary structure, homohexamer.

In terms of biological role, RNA chaperone that binds small regulatory RNA (sRNAs) and mRNAs to facilitate mRNA translational regulation in response to envelope stress, environmental stress and changes in metabolite concentrations. Also binds with high specificity to tRNAs. The sequence is that of RNA-binding protein Hfq from Paraburkholderia phymatum (strain DSM 17167 / CIP 108236 / LMG 21445 / STM815) (Burkholderia phymatum).